Here is a 343-residue protein sequence, read N- to C-terminus: Nicotianamine synthase 3 (343 aa).

It belongs to the nicotianamine synthase (NAS)-like family. In terms of tissue distribution, expressed in leaves.

It catalyses the reaction 3 S-adenosyl-L-methionine = nicotianamine + 3 S-methyl-5'-thioadenosine + 3 H(+). Functionally, synthesizes nicotianamine, a polyamine that is the first intermediate in the synthesis of the phytosiderophores of the mugineic acid type found in gramineae which serve as a sensor for the physiological iron status within the plant, and/or might be involved in the transport of iron. This Oryza sativa subsp. indica (Rice) protein is Nicotianamine synthase 3 (NAS3).